The chain runs to 607 residues: UvrABC system protein C (607 aa).

The GIY-YIG domain occupies 15–94 (ENPGVYLMKN…IKRHRPYFNV (80 aa)). The region spanning 204 to 239 (DQVLKLLIRLMNEASARLDYETAALRRDQIASIKEV) is the UVR domain.

The protein belongs to the UvrC family. As to quaternary structure, interacts with UvrB in an incision complex.

The protein localises to the cytoplasm. In terms of biological role, the UvrABC repair system catalyzes the recognition and processing of DNA lesions. UvrC both incises the 5' and 3' sides of the lesion. The N-terminal half is responsible for the 3' incision and the C-terminal half is responsible for the 5' incision. This is UvrABC system protein C from Dehalococcoides mccartyi (strain CBDB1).